The chain runs to 145 residues: Antimicrobial peptide NK-lysin (145 aa).

The first 22 residues, 1–22 (MTSRALLLLASALLGTPGLTFS), serve as a signal peptide directing secretion. Positions 23–62 (GLNPESYDLATAHLSDGEQFCQGLTQEDLQGDLLTERERQ) are excised as a propeptide. The Saposin B-type domain maps to 62 to 142 (QGIACWSCRK…VDIKLCKHKA (81 aa)). Disulfide bonds link Cys-66–Cys-138, Cys-69–Cys-132, and Cys-97–Cys-107. Residues 141-145 (KAGLI) constitute a propeptide that is removed on maturation.

It localises to the secreted. Functionally, may be an effector molecule of cytotoxic activity. Has antimicrobial activity. This chain is Antimicrobial peptide NK-lysin (NKL), found in Equus caballus (Horse).